A 338-amino-acid chain; its full sequence is Ketol-acid reductoisomerase (NADP(+)) (338 aa).

The KARI N-terminal Rossmann domain occupies 1-181; sequence MQVYYDKDCD…GGGRTGIIET (181 aa). NADP(+) contacts are provided by residues 24 to 27, arginine 47, serine 50, serine 52, and 82 to 85; these read FGSQ and DEFQ. Histidine 107 is a catalytic residue. Glycine 133 serves as a coordination point for NADP(+). The KARI C-terminal knotted domain occupies 182-327; it reads TFKDETETDL…EKLRSMMPWI (146 aa). The Mg(2+) site is built by aspartate 190, glutamate 194, glutamate 226, and glutamate 230. Residue serine 251 participates in substrate binding.

Belongs to the ketol-acid reductoisomerase family. Mg(2+) serves as cofactor.

The catalysed reaction is (2R)-2,3-dihydroxy-3-methylbutanoate + NADP(+) = (2S)-2-acetolactate + NADPH + H(+). It catalyses the reaction (2R,3R)-2,3-dihydroxy-3-methylpentanoate + NADP(+) = (S)-2-ethyl-2-hydroxy-3-oxobutanoate + NADPH + H(+). The protein operates within amino-acid biosynthesis; L-isoleucine biosynthesis; L-isoleucine from 2-oxobutanoate: step 2/4. It participates in amino-acid biosynthesis; L-valine biosynthesis; L-valine from pyruvate: step 2/4. Involved in the biosynthesis of branched-chain amino acids (BCAA). Catalyzes an alkyl-migration followed by a ketol-acid reduction of (S)-2-acetolactate (S2AL) to yield (R)-2,3-dihydroxy-isovalerate. In the isomerase reaction, S2AL is rearranged via a Mg-dependent methyl migration to produce 3-hydroxy-3-methyl-2-ketobutyrate (HMKB). In the reductase reaction, this 2-ketoacid undergoes a metal-dependent reduction by NADPH to yield (R)-2,3-dihydroxy-isovalerate. In Marinobacter nauticus (strain ATCC 700491 / DSM 11845 / VT8) (Marinobacter aquaeolei), this protein is Ketol-acid reductoisomerase (NADP(+)).